A 310-amino-acid polypeptide reads, in one-letter code: p-hydroxybenzoic acid efflux pump subunit AaeA (310 aa).

The helical transmembrane segment at 12–32 (AITLVLVILAFIAIFRAWVYY) threads the bilayer.

Belongs to the membrane fusion protein (MFP) (TC 8.A.1) family.

Its subcellular location is the cell inner membrane. Forms an efflux pump with AaeB. In Escherichia fergusonii (strain ATCC 35469 / DSM 13698 / CCUG 18766 / IAM 14443 / JCM 21226 / LMG 7866 / NBRC 102419 / NCTC 12128 / CDC 0568-73), this protein is p-hydroxybenzoic acid efflux pump subunit AaeA.